The sequence spans 354 residues: C-C chemokine receptor type 5 (354 aa).

Residues 1–32 (MDFQGSIPTYIYDIDYSMSAPCQKVNVKQIAA) lie on the Extracellular side of the membrane. Serine 6 carries an O-linked (GalNAc...) serine glycan. Sulfotyrosine occurs at positions 10 and 16. Disulfide bonds link cysteine 22/cysteine 271 and cysteine 103/cysteine 180. The chain crosses the membrane as a helical span at residues 33–60 (QLLPPLYSLVFIFGFVGNMMVFLILISC). Residues 61–70 (KKLKSMTDIY) lie on the Cytoplasmic side of the membrane. Residues 71 to 91 (LFNLAISDLLFLLTLPFWAHY) form a helical membrane-spanning segment. The Extracellular segment spans residues 92 to 104 (AANEWVFGNIMCK). The helical transmembrane segment at 105–126 (LFTGIYHIGYFGGIFFIILLTI) threads the bilayer. Residues 127–143 (DRYLAIVHAVFAIKART) are Cytoplasmic-facing. A helical membrane pass occupies residues 144 to 168 (VNFGVITSVVTWVVAVFVSLPEIIF). Residues 169–200 (MRSQKEGSHYTCSPHFLHIQYRFWKHFQTLKM) are Extracellular-facing. Residues 201-220 (VILSLILPLLVMVICYSGIL) form a helical membrane-spanning segment. At 221–237 (NTLFRCRNEKKRHRAVR) the chain is on the cytoplasmic side. Residues 238 to 262 (LIFAIMIVYFLFWTPYNIVLLLTTF) traverse the membrane as a helical segment. Over 263 to 279 (QEYFGLNNCSSSNRLDQ) the chain is Extracellular. The chain crosses the membrane as a helical span at residues 280–303 (AMQVTETLGMTHCCLNPVIYAFVG). Over 304–354 (EKFRNYLSVFFRKHIVKRFCKHCSIFQQVNPDRVSSVYTRSTGEQEVSTGL) the chain is Cytoplasmic. Residues cysteine 323 and cysteine 326 are each lipidated (S-palmitoyl cysteine). Phosphoserine; by BARK1 occurs at positions 338, 339, 344, and 351.

Belongs to the G-protein coupled receptor 1 family. As to quaternary structure, interacts with PRAF2. Efficient ligand binding to CCL3/MIP-1alpha and CCL4/MIP-1beta requires sulfation, O-glycosylation and sialic acid modifications. Glycosylation on Ser-6 is required for efficient binding of CCL4. Interacts with GRK2. Interacts with ARRB1 and ARRB2. Interacts with CNIH4. Interacts with S100A4; this interaction stimulates T-lymphocyte chemotaxis. Post-translationally, sulfated on at least 2 of the N-terminal tyrosines. Sulfation is required for efficient binding of the chemokines, CCL3 and CCL4. In terms of processing, O-glycosylated, but not N-glycosylated. Ser-6 appears to be the major site. Also sialylated glycans present which contribute to chemokine binding. Ser-17 may also be glycosylated and, if so, with small moieties such as a T-antigen. Palmitoylation in the C-terminal is important for cell surface expression. Post-translationally, phosphorylation on serine residues in the C-terminal is stimulated by binding CC chemokines especially by APO-RANTES.

Its subcellular location is the cell membrane. In terms of biological role, receptor for a number of inflammatory CC-chemokines including CCL3/MIP-1-alpha, CCL4/MIP-1-beta and RANTES and subsequently transduces a signal by increasing the intracellular calcium ion level. May play a role in the control of granulocytic lineage proliferation or differentiation. Participates in T-lymphocyte migration to the infection site by acting as a chemotactic receptor. The chain is C-C chemokine receptor type 5 (Ccr5) from Rattus norvegicus (Rat).